A 196-amino-acid chain; its full sequence is 7-methyl-GTP pyrophosphatase (196 aa).

The active-site Proton acceptor is Asp-72.

It belongs to the Maf family. YceF subfamily. A divalent metal cation is required as a cofactor.

It localises to the cytoplasm. It catalyses the reaction N(7)-methyl-GTP + H2O = N(7)-methyl-GMP + diphosphate + H(+). Nucleoside triphosphate pyrophosphatase that hydrolyzes 7-methyl-GTP (m(7)GTP). May have a dual role in cell division arrest and in preventing the incorporation of modified nucleotides into cellular nucleic acids. The sequence is that of 7-methyl-GTP pyrophosphatase from Neisseria meningitidis serogroup B (strain ATCC BAA-335 / MC58).